Consider the following 258-residue polypeptide: Ubiquinone/menaquinone biosynthesis C-methyltransferase UbiE (258 aa).

A disordered region spans residues 1 to 20; the sequence is MSESRTSADGGMETSYGFRE. S-adenosyl-L-methionine is bound by residues Thr81, Asp102, and 130 to 131; that span reads NA.

The protein belongs to the class I-like SAM-binding methyltransferase superfamily. MenG/UbiE family.

The enzyme catalyses a 2-demethylmenaquinol + S-adenosyl-L-methionine = a menaquinol + S-adenosyl-L-homocysteine + H(+). The catalysed reaction is a 2-methoxy-6-(all-trans-polyprenyl)benzene-1,4-diol + S-adenosyl-L-methionine = a 5-methoxy-2-methyl-3-(all-trans-polyprenyl)benzene-1,4-diol + S-adenosyl-L-homocysteine + H(+). Its pathway is quinol/quinone metabolism; menaquinone biosynthesis; menaquinol from 1,4-dihydroxy-2-naphthoate: step 2/2. It functions in the pathway cofactor biosynthesis; ubiquinone biosynthesis. Methyltransferase required for the conversion of demethylmenaquinol (DMKH2) to menaquinol (MKH2) and the conversion of 2-polyprenyl-6-methoxy-1,4-benzoquinol (DDMQH2) to 2-polyprenyl-3-methyl-6-methoxy-1,4-benzoquinol (DMQH2). The protein is Ubiquinone/menaquinone biosynthesis C-methyltransferase UbiE of Rhizobium etli (strain ATCC 51251 / DSM 11541 / JCM 21823 / NBRC 15573 / CFN 42).